A 297-amino-acid chain; its full sequence is N-acetylmuramic acid 6-phosphate etherase (297 aa).

Residues 55-218 enclose the SIS domain; sequence AAAALKAGGR…STGAMVKLGK (164 aa). Glu-83 (proton donor) is an active-site residue. Glu-114 is an active-site residue.

The protein belongs to the GCKR-like family. MurNAc-6-P etherase subfamily. Homodimer.

It catalyses the reaction N-acetyl-D-muramate 6-phosphate + H2O = N-acetyl-D-glucosamine 6-phosphate + (R)-lactate. The protein operates within amino-sugar metabolism; 1,6-anhydro-N-acetylmuramate degradation. It functions in the pathway amino-sugar metabolism; N-acetylmuramate degradation. Its pathway is cell wall biogenesis; peptidoglycan recycling. Specifically catalyzes the cleavage of the D-lactyl ether substituent of MurNAc 6-phosphate, producing GlcNAc 6-phosphate and D-lactate. Together with AnmK, is also required for the utilization of anhydro-N-acetylmuramic acid (anhMurNAc) either imported from the medium or derived from its own cell wall murein, and thus plays a role in cell wall recycling. The sequence is that of N-acetylmuramic acid 6-phosphate etherase from Serratia proteamaculans (strain 568).